The following is a 216-amino-acid chain: Methylthioribulose-1-phosphate dehydratase (216 aa).

Positions 101 and 103 each coordinate Zn(2+).

This sequence belongs to the aldolase class II family. MtnB subfamily. The cofactor is Zn(2+).

It carries out the reaction 5-(methylsulfanyl)-D-ribulose 1-phosphate = 5-methylsulfanyl-2,3-dioxopentyl phosphate + H2O. It participates in amino-acid biosynthesis; L-methionine biosynthesis via salvage pathway; L-methionine from S-methyl-5-thio-alpha-D-ribose 1-phosphate: step 2/6. Functionally, catalyzes the dehydration of methylthioribulose-1-phosphate (MTRu-1-P) into 2,3-diketo-5-methylthiopentyl-1-phosphate (DK-MTP-1-P). This is Methylthioribulose-1-phosphate dehydratase from Bradyrhizobium sp. (strain BTAi1 / ATCC BAA-1182).